We begin with the raw amino-acid sequence, 251 residues long: Protein unc-119 homolog B (251 aa).

Residues 1–28 (MSGSNPKAAAAASAAGPGGLVAGKEEKK) are disordered. Serine 2 is subject to N-acetylserine. Residue lysine 24 is modified to N6-acetyllysine. Tyrosine 142 is a tetradecanoate binding site.

The protein belongs to the PDE6D/unc-119 family. In terms of assembly, found in a complex with ARL3, RP2 and UNC119B; RP2 induces hydrolysis of GTP ARL3 in the complex, leading to the release of UNC119B. Interacts with NPHP3 (when myristoylated). Interacts with CYS1 (when myristoylated). Interacts with MACIR; interaction only takes place when UNC119B is not liganded with myristoylated proteins.

The protein localises to the cell projection. It is found in the cilium. In terms of biological role, myristoyl-binding protein that acts as a cargo adapter: specifically binds the myristoyl moiety of a subset of N-terminally myristoylated proteins and is required for their localization. Binds myristoylated NPHP3 and plays a key role in localization of NPHP3 to the primary cilium membrane. Does not bind all myristoylated proteins. Probably plays a role in trafficking proteins in photoreceptor cells. This chain is Protein unc-119 homolog B (UNC119B), found in Homo sapiens (Human).